The chain runs to 199 residues: Pyridoxal 5'-phosphate synthase subunit PdxT (199 aa).

47–49 (GES) provides a ligand contact to L-glutamine. The Nucleophile role is filled by cysteine 79. L-glutamine-binding positions include arginine 106 and 133–134 (IR). Residues histidine 169 and glutamate 171 each act as charge relay system in the active site.

It belongs to the glutaminase PdxT/SNO family. In the presence of PdxS, forms a dodecamer of heterodimers. Only shows activity in the heterodimer.

The enzyme catalyses aldehydo-D-ribose 5-phosphate + D-glyceraldehyde 3-phosphate + L-glutamine = pyridoxal 5'-phosphate + L-glutamate + phosphate + 3 H2O + H(+). The catalysed reaction is L-glutamine + H2O = L-glutamate + NH4(+). Its pathway is cofactor biosynthesis; pyridoxal 5'-phosphate biosynthesis. Its function is as follows. Catalyzes the hydrolysis of glutamine to glutamate and ammonia as part of the biosynthesis of pyridoxal 5'-phosphate. The resulting ammonia molecule is channeled to the active site of PdxS. The protein is Pyridoxal 5'-phosphate synthase subunit PdxT of Desulfitobacterium hafniense (strain DSM 10664 / DCB-2).